The primary structure comprises 379 residues: MPADDYPVTELTKALIARPSVTPLDEGCQTLMAERLSAIGFNIEPMVFEDTTNMWARRGNEGPVFCFAGHTDVVPTGDVSRWHTPPFVPTIIDGYLYGRGAADMKGSLAAMIIATERFVAKHPDHHGSIAFLITSDEEGPFINGTTRVIDTLEARNEKITWALVGEPSSTLKLGDVVKNGRRGSLTGNLTVKGIQGHVAYPHLADNPIHKAAPFLAELSQMHWDNGNEFFPPTSFQIANINGGTGASNVIPGALDVMFNFRYSTEVSADILIERVEALLKAHELDYDISWIFNGLPFLTGDGPLLDATRIAIRQVTGYETDPQTTGGTSDGRFIAPTGAKVLELGPVNATIHKVNECVKVDDLEQLALCYEVILEQLLC.

His70 contributes to the Zn(2+) binding site. Asp72 is a catalytic residue. Asp103 contacts Zn(2+). Glu137 serves as the catalytic Proton acceptor. Zn(2+) contacts are provided by Glu138, Glu166, and His352.

This sequence belongs to the peptidase M20A family. DapE subfamily. Homodimer. Zn(2+) serves as cofactor. The cofactor is Co(2+).

It carries out the reaction N-succinyl-(2S,6S)-2,6-diaminopimelate + H2O = (2S,6S)-2,6-diaminopimelate + succinate. It functions in the pathway amino-acid biosynthesis; L-lysine biosynthesis via DAP pathway; LL-2,6-diaminopimelate from (S)-tetrahydrodipicolinate (succinylase route): step 3/3. Its function is as follows. Catalyzes the hydrolysis of N-succinyl-L,L-diaminopimelic acid (SDAP), forming succinate and LL-2,6-diaminopimelate (DAP), an intermediate involved in the bacterial biosynthesis of lysine and meso-diaminopimelic acid, an essential component of bacterial cell walls. This chain is Succinyl-diaminopimelate desuccinylase, found in Shewanella baltica (strain OS195).